The primary structure comprises 1104 residues: DNA polymerase delta catalytic subunit (1104 aa).

The interval 1–60 is disordered; that stretch reads MKRSIVTGGGNNDKKFKAQPPPKNNYRGGGDDEEDDEFEEDDDEDEGDEFGEEEDEDDID. Residues 31-60 are compositionally biased toward acidic residues; sequence DDEEDDEFEEDDDEDEGDEFGEEEDEDDID. Residues cysteine 1012, cysteine 1015, cysteine 1027, and cysteine 1030 each coordinate Zn(2+). The segment at 1012–1030 adopts a CysA-type zinc-finger fold; that stretch reads CMNCPKELTDTESTTCINC. Residues cysteine 1059, cysteine 1062, cysteine 1072, and cysteine 1077 each coordinate [4Fe-4S] cluster. The CysB motif signature appears at 1059–1077; that stretch reads CQRCSGSLHQPVLCSNRDC.

The protein belongs to the DNA polymerase type-B family. In terms of assembly, heterotetramer composed of subunits of 125 kDa, 50 kDa, 66 kDa and 12 kDa. The 125 kDa subunit contains the polymerase active site and most likely the active site for the 3'-5' exonuclease activity. Requires [4Fe-4S] cluster as cofactor.

It localises to the nucleus. The enzyme catalyses DNA(n) + a 2'-deoxyribonucleoside 5'-triphosphate = DNA(n+1) + diphosphate. In terms of biological role, possesses two enzymatic activities: DNA synthesis (polymerase) and an exonucleolytic activity that degrades single stranded DNA in the 3'- to 5'-direction. This Dictyostelium discoideum (Social amoeba) protein is DNA polymerase delta catalytic subunit (pold1).